We begin with the raw amino-acid sequence, 300 residues long: GTPase Era (300 aa).

In terms of domain architecture, Era-type G spans 8–176 (RCGYVAIVGR…ESLIASHLPE (169 aa)). Residues 16–23 (GRPNVGKS) form a G1 region. 16 to 23 (GRPNVGKS) contributes to the GTP binding site. Positions 42 to 46 (QTTRH) are G2. Residues 63-66 (DTPG) form a G3 region. Residues 63 to 67 (DTPGM) and 125 to 128 (NKTD) each bind GTP. Positions 125 to 128 (NKTD) are G4. The interval 155-157 (ISA) is G5. The region spanning 199–283 (VREKIMRQLG…MLNLWVKVKG (85 aa)) is the KH type-2 domain.

This sequence belongs to the TRAFAC class TrmE-Era-EngA-EngB-Septin-like GTPase superfamily. Era GTPase family. In terms of assembly, monomer.

It is found in the cytoplasm. The protein resides in the cell inner membrane. Functionally, an essential GTPase that binds both GDP and GTP, with rapid nucleotide exchange. Plays a role in 16S rRNA processing and 30S ribosomal subunit biogenesis and possibly also in cell cycle regulation and energy metabolism. This is GTPase Era from Pseudomonas savastanoi pv. phaseolicola (strain 1448A / Race 6) (Pseudomonas syringae pv. phaseolicola (strain 1448A / Race 6)).